Reading from the N-terminus, the 160-residue chain is Transcription antitermination protein NusB (160 aa).

This sequence belongs to the NusB family.

Involved in transcription antitermination. Required for transcription of ribosomal RNA (rRNA) genes. Binds specifically to the boxA antiterminator sequence of the ribosomal RNA (rrn) operons. This is Transcription antitermination protein NusB from Salinibacter ruber (strain DSM 13855 / M31).